The following is an 86-amino-acid chain: MANHKSCEKRARQTVVKTERNRFYKTRIKNVTKSVLSAVELADKEKAVEAMKAANQYFHHCVSKGILKKGTASRKVSRLQLKVNAI.

This sequence belongs to the bacterial ribosomal protein bS20 family.

In terms of biological role, binds directly to 16S ribosomal RNA. This is Small ribosomal subunit protein bS20 from Aliarcobacter butzleri (strain RM4018) (Arcobacter butzleri).